Consider the following 234-residue polypeptide: Ribose-5-phosphate isomerase A (234 aa).

Substrate is bound by residues 28 to 31 (TGST), 85 to 88 (DGAD), and 98 to 101 (KGLG). Residue E107 is the Proton acceptor of the active site. K125 is a binding site for substrate.

It belongs to the ribose 5-phosphate isomerase family. In terms of assembly, homodimer.

It catalyses the reaction aldehydo-D-ribose 5-phosphate = D-ribulose 5-phosphate. It functions in the pathway carbohydrate degradation; pentose phosphate pathway; D-ribose 5-phosphate from D-ribulose 5-phosphate (non-oxidative stage): step 1/1. Functionally, catalyzes the reversible conversion of ribose-5-phosphate to ribulose 5-phosphate. The chain is Ribose-5-phosphate isomerase A from Roseiflexus castenholzii (strain DSM 13941 / HLO8).